A 32-amino-acid polypeptide reads, in one-letter code: Photosystem I reaction center subunit XII (32 aa).

Residues 4-26 (ISDSQIIVILLSVFITSILALRL) form a helical membrane-spanning segment.

The protein belongs to the PsaM family.

Its subcellular location is the plastid. It localises to the chloroplast thylakoid membrane. The polypeptide is Photosystem I reaction center subunit XII (Marchantia polymorpha (Common liverwort)).